The following is a 334-amino-acid chain: Methionine import ATP-binding protein MetN (334 aa).

An ABC transporter domain is found at 7 to 246; the sequence is VEFRSVSKVF…PRSAPARAFV (240 aa). 43 to 50 is a binding site for ATP; sequence GYSGAGKS.

This sequence belongs to the ABC transporter superfamily. Methionine importer (TC 3.A.1.24) family. In terms of assembly, the complex is composed of two ATP-binding proteins (MetN), two transmembrane proteins (MetI) and a solute-binding protein (MetQ).

Its subcellular location is the cell membrane. The catalysed reaction is L-methionine(out) + ATP + H2O = L-methionine(in) + ADP + phosphate + H(+). It carries out the reaction D-methionine(out) + ATP + H2O = D-methionine(in) + ADP + phosphate + H(+). Functionally, part of the ABC transporter complex MetNIQ involved in methionine import. Responsible for energy coupling to the transport system. The chain is Methionine import ATP-binding protein MetN from Nocardia farcinica (strain IFM 10152).